The chain runs to 116 residues: MSEVVQSVDPINFTESASLKVKELIEEEGDNSLSLRVYITGGGCSGFQYAFAFDNEIKEDDMVITKNGVRLLVDSMSFQYLVGADVDYKDDVEGAYFVIRNPNAKTTCGCGSSFSV.

Iron-sulfur cluster contacts are provided by Cys-44, Cys-108, and Cys-110.

Belongs to the HesB/IscA family. In terms of assembly, homodimer. Requires iron-sulfur cluster as cofactor.

Functionally, required for insertion of 4Fe-4S clusters for at least IspG. The protein is Iron-sulfur cluster insertion protein ErpA of Francisella philomiragia subsp. philomiragia (strain ATCC 25017 / CCUG 19701 / FSC 153 / O#319-036).